A 338-amino-acid chain; its full sequence is Glycerol-3-phosphate dehydrogenase [NAD(P)+] (338 aa).

Residues W12, H33, and K110 each coordinate NADPH. 3 residues coordinate sn-glycerol 3-phosphate: K110, G142, and S144. An NADPH-binding site is contributed by A146. Sn-glycerol 3-phosphate is bound by residues K197, D250, S260, R261, and N262. Residue K197 is the Proton acceptor of the active site. Position 261 (R261) interacts with NADPH. NADPH-binding residues include V286 and E288.

This sequence belongs to the NAD-dependent glycerol-3-phosphate dehydrogenase family.

It is found in the cytoplasm. It carries out the reaction sn-glycerol 3-phosphate + NAD(+) = dihydroxyacetone phosphate + NADH + H(+). The enzyme catalyses sn-glycerol 3-phosphate + NADP(+) = dihydroxyacetone phosphate + NADPH + H(+). Its pathway is membrane lipid metabolism; glycerophospholipid metabolism. In terms of biological role, catalyzes the reduction of the glycolytic intermediate dihydroxyacetone phosphate (DHAP) to sn-glycerol 3-phosphate (G3P), the key precursor for phospholipid synthesis. The sequence is that of Glycerol-3-phosphate dehydrogenase [NAD(P)+] from Acidobacterium capsulatum (strain ATCC 51196 / DSM 11244 / BCRC 80197 / JCM 7670 / NBRC 15755 / NCIMB 13165 / 161).